A 350-amino-acid polypeptide reads, in one-letter code: MAKELADKAKEAFVDDDFDVAVDLYSKAIDLDPNCAEFFADRAQAYIKLESFTEAVADANKAIELDPSLTKAYLRKGTACMKLEEYRTAKTALEKGASITPSESKFKKLIDECNFLITEEEKDLVQPVPSTLPSSVTAPPVSELDVTPTAKYRHEYYQKPEEVVVTVFAKGIPKQNVNIDFGEQILSVVIEVPGEDAYYLQPRLFGKIIPDKCKYEVLSTKIEICLAKADIITWASLEHGKGPAVLPKPNVSSEVSQRPAYPSSKKVKDWDKLEAEVKKQEKDEKLEGDAALNKFFREIYQNADEDMRRAMSKSFVESNGTVLSTNWQEVGTKTIESTPPDGMELKKWEI.

3 TPR repeats span residues 2 to 35 (AKELADKAKEAFVDDDFDVAVDLYSKAIDLDPNC), 37 to 69 (EFFADRAQAYIKLESFTEAVADANKAIELDPSL), and 71 to 103 (KAYLRKGTACMKLEEYRTAKTALEKGASITPSE). The CS domain occupies 149-238 (TAKYRHEYYQ…ADIITWASLE (90 aa)). One can recognise an SGS domain in the interval 260 to 350 (AYPSSKKVKD…DGMELKKWEI (91 aa)).

This sequence belongs to the SGT1 family. As to quaternary structure, interacts with RAR1. Forms a ternary complex with RAR1 and barley HSP90.

Its function is as follows. Functions in R gene-mediated resistance, but participates in a lower extent than SGT1B to RPP5-mediated resistance. Not required for RPM1, RPS2, RPS4 and RPS5-mediated resistance. Probably required for SCF-mediated ubiquitination, by coupling HSP90 to SCF complex for ubiquitination of HSP90 client proteins. The sequence is that of Protein SGT1 homolog A (SGT1A) from Arabidopsis thaliana (Mouse-ear cress).